A 407-amino-acid chain; its full sequence is Phosphopentomutase (407 aa).

Asp10, Asp306, His311, Asp347, His348, and His359 together coordinate Mn(2+).

This sequence belongs to the phosphopentomutase family. Mn(2+) serves as cofactor.

It localises to the cytoplasm. The catalysed reaction is 2-deoxy-alpha-D-ribose 1-phosphate = 2-deoxy-D-ribose 5-phosphate. It carries out the reaction alpha-D-ribose 1-phosphate = D-ribose 5-phosphate. Its pathway is carbohydrate degradation; 2-deoxy-D-ribose 1-phosphate degradation; D-glyceraldehyde 3-phosphate and acetaldehyde from 2-deoxy-alpha-D-ribose 1-phosphate: step 1/2. Functionally, isomerase that catalyzes the conversion of deoxy-ribose 1-phosphate (dRib-1-P) and ribose 1-phosphate (Rib-1-P) to deoxy-ribose 5-phosphate (dRib-5-P) and ribose 5-phosphate (Rib-5-P), respectively. The chain is Phosphopentomutase from Cronobacter sakazakii (strain ATCC BAA-894) (Enterobacter sakazakii).